The primary structure comprises 992 residues: UPF0182 protein RHA1_ro06389 (992 aa).

A run of 7 helical transmembrane segments spans residues 18–38, 63–83, 114–134, 174–194, 211–231, 260–280, and 288–308; these read VLLVLALVVAALLLVGPRLIS, LLLFLVVGVVVGGIVWLALLL, LFGLAIPIAVGLLAGLIAQSS, WLFVAVLLAFFASLVTHYIFG, VQLAVLAGTFILLKAVAYWFD, KLILLAIAVICAGAFFAAIFL, and MATALLVLSSILVGAVWPLVV. A disordered region spans residues 904 to 948; it reads TGSVATAPSAEEGTPPETGTTPPVDQGAAPAPTAPATPPSGTDVS. Over residues 908–934 the composition is skewed to low complexity; it reads ATAPSAEEGTPPETGTTPPVDQGAAPA.

Belongs to the UPF0182 family.

It is found in the cell membrane. In Rhodococcus jostii (strain RHA1), this protein is UPF0182 protein RHA1_ro06389.